A 419-amino-acid polypeptide reads, in one-letter code: Gamma-glutamyl phosphate reductase (419 aa).

It belongs to the gamma-glutamyl phosphate reductase family.

It is found in the cytoplasm. The enzyme catalyses L-glutamate 5-semialdehyde + phosphate + NADP(+) = L-glutamyl 5-phosphate + NADPH + H(+). It participates in amino-acid biosynthesis; L-proline biosynthesis; L-glutamate 5-semialdehyde from L-glutamate: step 2/2. Catalyzes the NADPH-dependent reduction of L-glutamate 5-phosphate into L-glutamate 5-semialdehyde and phosphate. The product spontaneously undergoes cyclization to form 1-pyrroline-5-carboxylate. The protein is Gamma-glutamyl phosphate reductase of Marinomonas sp. (strain MWYL1).